The primary structure comprises 153 residues: ATP synthase subunit b' (153 aa).

The chain crosses the membrane as a helical span at residues 23-40 (LMAIQVVALTYILNSLFF).

The protein belongs to the ATPase B chain family. F-type ATPases have 2 components, F(1) - the catalytic core - and F(0) - the membrane proton channel. F(1) has five subunits: alpha(3), beta(3), gamma(1), delta(1), epsilon(1). F(0) has four main subunits: a(1), b(1), b'(1) and c(10-14). The alpha and beta chains form an alternating ring which encloses part of the gamma chain. F(1) is attached to F(0) by a central stalk formed by the gamma and epsilon chains, while a peripheral stalk is formed by the delta, b and b' chains.

Its subcellular location is the cellular thylakoid membrane. F(1)F(0) ATP synthase produces ATP from ADP in the presence of a proton or sodium gradient. F-type ATPases consist of two structural domains, F(1) containing the extramembraneous catalytic core and F(0) containing the membrane proton channel, linked together by a central stalk and a peripheral stalk. During catalysis, ATP synthesis in the catalytic domain of F(1) is coupled via a rotary mechanism of the central stalk subunits to proton translocation. Its function is as follows. Component of the F(0) channel, it forms part of the peripheral stalk, linking F(1) to F(0). The b'-subunit is a diverged and duplicated form of b found in plants and photosynthetic bacteria. In Prochlorococcus marinus (strain AS9601), this protein is ATP synthase subunit b'.